Reading from the N-terminus, the 245-residue chain is UPF0280 protein UNCMA_16740 (245 aa).

This sequence belongs to the UPF0280 family.

The chain is UPF0280 protein UNCMA_16740 from Methanocella arvoryzae (strain DSM 22066 / NBRC 105507 / MRE50).